A 156-amino-acid polypeptide reads, in one-letter code: Snaclec A5 (156 aa).

The signal sequence occupies residues Met1–Ala23. Intrachain disulfides connect Cys27-Cys38, Cys55-Cys154, and Cys129-Cys146. Positions His34–Glu155 constitute a C-type lectin domain.

This sequence belongs to the snaclec family. Heterodimer; disulfide-linked. As to expression, expressed by the venom gland.

It localises to the secreted. Interferes with one step of hemostasis (modulation of platelet aggregation, or coagulation cascade, for example). This is Snaclec A5 from Macrovipera lebetinus (Levantine viper).